Reading from the N-terminus, the 205-residue chain is Protein phosphatase inhibitor 2 (205 aa).

The interval 1-44 is disordered; it reads MAASTASHRPIKGILKNKTSTTSSMVASAEQPRGNVDEELSKKS. At Ala2 the chain carries N-acetylalanine. 2 required for binding PPP1CC regions span residues 12 to 17 and 43 to 55; these read KGILKN and KSQK…ILAT. Polar residues predominate over residues 17–26; it reads NKTSTTSSMV. The segment covering 35–44 has biased composition (basic and acidic residues); sequence NVDEELSKKS. Ser44 is subject to Phosphoserine; by ATM. At Thr73 the chain carries Phosphothreonine; by GSK3. Ser87 is modified (phosphoserine). A phosphothreonine mark is found at Thr89 and Thr92. Residues 111–142 are disordered; the sequence is EPKYRIQEQESSGEEDSDLSPEEREKKRQFEM. 4 positions are modified to phosphoserine: Ser121, Ser122, Ser127, and Ser130. Acidic residues predominate over residues 121-130; that stretch reads SSGEEDSDLS. The segment covering 131 to 142 has biased composition (basic and acidic residues); it reads PEEREKKRQFEM. Residues 147–150 form a required for binding PPP1CC catalytic center, displacing metal ions and inhibition of PPP1CC catalytic activity region; sequence HYNE. Positions 163-205 are disordered; sequence KDLHDDDEDEEMLETADGESMNTEESNQGSTPSDQQQNKLRSS. Residues 167 to 179 show a composition bias toward acidic residues; it reads DDDEDEEMLETAD. Residues 182–205 show a composition bias toward polar residues; the sequence is SMNTEESNQGSTPSDQQQNKLRSS.

The protein belongs to the protein phosphatase inhibitor 2 family. Heterodimer with PP1. Post-translationally, phosphorylation on Thr-73 by GSK3 activates PP1 by dissociating the PP1-PPP1R2 complex. Phosphorylation on Ser-44 by ATM activates PP1 by dissociating the PP1-PPP1R2 complex.

In terms of biological role, inhibitor of protein-phosphatase 1. The polypeptide is Protein phosphatase inhibitor 2 (PPP1R2) (Homo sapiens (Human)).